The chain runs to 125 residues: Calcitonin receptor-stimulating peptide 1 (125 aa).

The first 25 residues, 1–25 (MGFWKFPPFLVLSILVLYQAGMFHA), serve as a signal peptide directing secretion. The propeptide occupies 26-77 (APFRSVFDGRFDPATLDEEESRLLLAAMVNDYEQMRARESEKAQKTEGSRIQ). Cysteines 81 and 86 form a disulfide.

The protein belongs to the calcitonin family.

It localises to the secreted. Functionally, stimulates cAMP production in porcine kidney cell line LLC-PK1 via the calcitonin receptor (CT) but not via the CT-like (CL) receptor. The sequence is that of Calcitonin receptor-stimulating peptide 1 (CRSP1) from Capra hircus (Goat).